Consider the following 113-residue polypeptide: Nucleoid-associated protein sync_0026 (113 aa).

Belongs to the YbaB/EbfC family. In terms of assembly, homodimer.

The protein resides in the cytoplasm. Its subcellular location is the nucleoid. Its function is as follows. Binds to DNA and alters its conformation. May be involved in regulation of gene expression, nucleoid organization and DNA protection. This Synechococcus sp. (strain CC9311) protein is Nucleoid-associated protein sync_0026.